The primary structure comprises 415 residues: Peptide chain release factor subunit 1 (415 aa).

This sequence belongs to the eukaryotic release factor 1 family. Heterodimer of two subunits, one of which binds GTP.

The protein localises to the cytoplasm. Directs the termination of nascent peptide synthesis (translation) in response to the termination codons UAA, UAG and UGA. This Thermococcus onnurineus (strain NA1) protein is Peptide chain release factor subunit 1.